The following is a 201-amino-acid chain: 3-isopropylmalate dehydratase small subunit (201 aa).

This sequence belongs to the LeuD family. LeuD type 1 subfamily. In terms of assembly, heterodimer of LeuC and LeuD.

The catalysed reaction is (2R,3S)-3-isopropylmalate = (2S)-2-isopropylmalate. The protein operates within amino-acid biosynthesis; L-leucine biosynthesis; L-leucine from 3-methyl-2-oxobutanoate: step 2/4. Functionally, catalyzes the isomerization between 2-isopropylmalate and 3-isopropylmalate, via the formation of 2-isopropylmaleate. The polypeptide is 3-isopropylmalate dehydratase small subunit (Rhodopseudomonas palustris (strain ATCC BAA-98 / CGA009)).